We begin with the raw amino-acid sequence, 45 residues long: Photosystem II reaction center protein K (45 aa).

The propeptide occupies 1-8 (MEAVFLLA). Residues 24–44 (LPVIPVFFLALAFVWQAAVGF) traverse the membrane as a helical segment.

Belongs to the PsbK family. In terms of assembly, PSII is composed of 1 copy each of membrane proteins PsbA, PsbB, PsbC, PsbD, PsbE, PsbF, PsbH, PsbI, PsbJ, PsbK, PsbL, PsbM, PsbT, PsbX, PsbY, PsbZ, Psb30/Ycf12, peripheral proteins PsbO, CyanoQ (PsbQ), PsbU, PsbV and a large number of cofactors. It forms dimeric complexes.

Its subcellular location is the cellular thylakoid membrane. One of the components of the core complex of photosystem II (PSII). PSII is a light-driven water:plastoquinone oxidoreductase that uses light energy to abstract electrons from H(2)O, generating O(2) and a proton gradient subsequently used for ATP formation. It consists of a core antenna complex that captures photons, and an electron transfer chain that converts photonic excitation into a charge separation. The polypeptide is Photosystem II reaction center protein K (Crocosphaera subtropica (strain ATCC 51142 / BH68) (Cyanothece sp. (strain ATCC 51142))).